The sequence spans 367 residues: Chorismate synthase (367 aa).

Residue R48 participates in NADP(+) binding. Residues 125–127, 243–244, G283, 298–302, and R324 each bind FMN; these read RSS, NA, and KPTSS.

It belongs to the chorismate synthase family. Homotetramer. Requires FMNH2 as cofactor.

It carries out the reaction 5-O-(1-carboxyvinyl)-3-phosphoshikimate = chorismate + phosphate. It functions in the pathway metabolic intermediate biosynthesis; chorismate biosynthesis; chorismate from D-erythrose 4-phosphate and phosphoenolpyruvate: step 7/7. Functionally, catalyzes the anti-1,4-elimination of the C-3 phosphate and the C-6 proR hydrogen from 5-enolpyruvylshikimate-3-phosphate (EPSP) to yield chorismate, which is the branch point compound that serves as the starting substrate for the three terminal pathways of aromatic amino acid biosynthesis. This reaction introduces a second double bond into the aromatic ring system. In Psychrobacter cryohalolentis (strain ATCC BAA-1226 / DSM 17306 / VKM B-2378 / K5), this protein is Chorismate synthase.